Here is a 370-residue protein sequence, read N- to C-terminus: 2-Hydroxyacid oxidase 1 (370 aa).

One can recognise an FMN hydroxy acid dehydrogenase domain in the interval 1-365 (MLPRLICIND…DKTLVRKNPL (365 aa)). A glyoxylate-binding site is contributed by Tyr-26. FMN contacts are provided by residues 79–81 (ATA), Ser-108, and Gln-130. Tyr-132 lines the glyoxylate pocket. An FMN-binding site is contributed by Thr-158. Position 167 (Arg-167) interacts with glyoxylate. Residue Lys-184 is modified to N6-succinyllysine. A phosphoserine mark is found at Ser-194 and Ser-230. Residues Lys-236 and Ser-258 each contribute to the FMN site. Residues His-260 and Arg-263 each contribute to the glyoxylate site. Catalysis depends on His-260, which acts as the Proton acceptor. FMN is bound by residues 291-295 (DGGVR) and 314-315 (GR). The short motif at 368-370 (SKI) is the Microbody targeting signal element.

The protein belongs to the FMN-dependent alpha-hydroxy acid dehydrogenase family. Homotetramer. FMN is required as a cofactor. In terms of tissue distribution, highly expressed in liver.

It localises to the peroxisome matrix. It catalyses the reaction a (2S)-2-hydroxycarboxylate + O2 = a 2-oxocarboxylate + H2O2. The enzyme catalyses glycolate + O2 = glyoxylate + H2O2. The catalysed reaction is glyoxylate + O2 + H2O = oxalate + H2O2 + H(+). It carries out the reaction 2-hydroxyhexadecanoate + O2 = 2-oxohexadecanoate + H2O2. It catalyses the reaction 2-hydroxyoctanoate + O2 = 2-oxooctanoate + H2O2. The protein operates within amino-acid biosynthesis; glycine biosynthesis. With respect to regulation, inhibited by its product oxalate. Inhibited by high concentrations of dichlorophenolindophenol (DCIP) in vitro. Its function is as follows. Broad substrate specificity (S)-2-hydroxy-acid oxidase that preferentially oxidizes glycolate. The glyoxylate produced by the oxidation of glycolate can then be utilized by alanine-glyoxylate aminotransferase for the peroxisomal synthesis of glycine; this pathway appears to be an important step for the detoxification of glyoxylate which, if allowed to accumulate, may be metabolized to oxalate with formation of kidney stones. Can also catalyze the oxidation of glyoxylate, and long chain hydroxyacids such as 2-hydroxyhexadecanoate and 2-hydroxyoctanoate, albeit with much lower catalytic efficiency. Active in vitro with the artificial electron acceptor 2,6-dichlorophenolindophenol (DCIP), but O2 is believed to be the physiological electron acceptor, leading to the production of H2O2. Is not active on L-lactate and 2-hydroxybutanoate. In Homo sapiens (Human), this protein is 2-Hydroxyacid oxidase 1.